The chain runs to 274 residues: Nitrogenase iron protein (274 aa).

8 to 15 (GKGGIGKS) lines the ATP pocket. Cys-94 lines the [4Fe-4S] cluster pocket. Residue Arg-97 is modified to ADP-ribosylarginine; by dinitrogenase reductase ADP-ribosyltransferase. Cys-129 contacts [4Fe-4S] cluster.

Belongs to the NifH/BchL/ChlL family. As to quaternary structure, homodimer. Requires [4Fe-4S] cluster as cofactor. In terms of processing, the reversible ADP-ribosylation of Arg-97 inactivates the nitrogenase reductase and regulates nitrogenase activity.

It catalyses the reaction N2 + 8 reduced [2Fe-2S]-[ferredoxin] + 16 ATP + 16 H2O = H2 + 8 oxidized [2Fe-2S]-[ferredoxin] + 2 NH4(+) + 16 ADP + 16 phosphate + 6 H(+). The key enzymatic reactions in nitrogen fixation are catalyzed by the nitrogenase complex, which has 2 components: the iron protein and the molybdenum-iron protein. The chain is Nitrogenase iron protein from Methanocella arvoryzae (strain DSM 22066 / NBRC 105507 / MRE50).